A 323-amino-acid chain; its full sequence is Protein translocase subunit SecF (323 aa).

The next 6 membrane-spanning stretches (helical) occupy residues 19-39, 138-158, 162-182, 189-209, 244-264, and 269-289; these read GVIV…FKGF, ILSL…RYEW, LASV…VIVF, EVIA…IIIF, LTVF…IIGF, and LIGT…VALL.

Belongs to the SecD/SecF family. SecF subfamily. As to quaternary structure, forms a complex with SecD. Part of the essential Sec protein translocation apparatus which comprises SecA, SecYEG and auxiliary proteins SecDF-YajC and YidC.

Its subcellular location is the cell inner membrane. Part of the Sec protein translocase complex. Interacts with the SecYEG preprotein conducting channel. SecDF uses the proton motive force (PMF) to complete protein translocation after the ATP-dependent function of SecA. This is Protein translocase subunit SecF from Helicobacter pylori (strain J99 / ATCC 700824) (Campylobacter pylori J99).